The sequence spans 342 residues: GTPase Obg (342 aa).

Positions 1–159 (MQFIDQAQIE…KLLRLELKLL (159 aa)) constitute an Obg domain. In terms of domain architecture, OBG-type G spans 160–330 (AEVGIIGLPN…MLQEVWGILD (171 aa)). Residues 166–173 (GLPNAGKS), 191–195 (FTTLI), 213–216 (DIPG), 280–283 (NKID), and 311–313 (SAV) each bind GTP. The Mg(2+) site is built by Ser-173 and Thr-193.

This sequence belongs to the TRAFAC class OBG-HflX-like GTPase superfamily. OBG GTPase family. As to quaternary structure, monomer. Mg(2+) serves as cofactor.

The protein resides in the cytoplasm. Its function is as follows. An essential GTPase which binds GTP, GDP and possibly (p)ppGpp with moderate affinity, with high nucleotide exchange rates and a fairly low GTP hydrolysis rate. Plays a role in control of the cell cycle, stress response, ribosome biogenesis and in those bacteria that undergo differentiation, in morphogenesis control. The sequence is that of GTPase Obg from Trichormus variabilis (strain ATCC 29413 / PCC 7937) (Anabaena variabilis).